A 63-amino-acid polypeptide reads, in one-letter code: Large ribosomal subunit protein bL28 (63 aa).

It belongs to the bacterial ribosomal protein bL28 family.

This Desulfitobacterium hafniense (strain DSM 10664 / DCB-2) protein is Large ribosomal subunit protein bL28.